Here is a 392-residue protein sequence, read N- to C-terminus: GDP-mannose transporter (392 aa).

A compositionally biased stretch (basic and acidic residues) spans 1–11 (MDDKKNEDLEM). Positions 1–25 (MDDKKNEDLEMRNFNGRSSPSQRDP) are disordered. The Cytoplasmic portion of the chain corresponds to 1 to 45 (MDDKKNEDLEMRNFNGRSSPSQRDPFLAKPGAAAKRGNSAFDLSN). A helical membrane pass occupies residues 46–66 (VTNSPGISILAYCLASISMTV). The Lumenal segment spans residues 67–76 (TNKYCVSGSN). A helical transmembrane segment spans residues 77–97 (WNLNFFYLAIQSVVCIIAIII). The Cytoplasmic segment spans residues 98–116 (CKQAGLITNLAPFDTKKAK). Residues 117 to 139 (TWFPISLLLVGMIYTSTKALQFL) form a helical membrane-spanning segment. Topologically, residues 140-142 (SVP) are lumenal. The helical transmembrane segment at 143–165 (VYTIFKNLTIIVIAYGEVLWFGG) threads the bilayer. The Cytoplasmic segment spans residues 166 to 171 (SVTPSA). A helical transmembrane segment spans residues 172–191 (LFSFGLMVLSSVVAAWADIQ). Topologically, residues 192-210 (HALYGGGAAQSAEAAAALS) are lumenal. Residues 211 to 231 (TLNAGYAWMGMNVFCTAAYVL) form a helical membrane-spanning segment. Topologically, residues 232–246 (SMRKVIKKMNFKDWD) are cytoplasmic. Residues 247 to 267 (TMFYNNLLTIPVLFVCSFIFE) traverse the membrane as a helical segment. Asn268 and Asn273 each carry an N-linked (GlcNAc...) asparagine glycan. At 268–285 (NWSSENLTKNFPLETRNN) the chain is on the lumenal side. Residues 286–306 (LILGMIYSGLATIFISYCSAW) form a helical membrane-spanning segment. At 307-314 (CIRVTSST) the chain is on the cytoplasmic side. The chain crosses the membrane as a helical span at residues 315–337 (TYSMVGALNKLPIAVSGLVFFAA). At 338–340 (PVT) the chain is on the lumenal side. The helical transmembrane segment at 341-360 (FGSVSAIFIGFVSGIVYAWA) threads the bilayer. Over 361 to 392 (KVRQNQSKGNILPTTQPVMSASSQSNRDAAKA) the chain is Cytoplasmic. The interval 373-392 (PTTQPVMSASSQSNRDAAKA) is disordered.

The protein belongs to the TPT transporter family. SLC35D subfamily. In terms of assembly, homooligomer.

The protein localises to the golgi apparatus membrane. It localises to the cytoplasmic vesicle membrane. The protein resides in the endoplasmic reticulum membrane. Functionally, involved in the import of GDP-mannose from the cytoplasm into the Golgi lumen. This Botryotinia fuckeliana (strain B05.10) (Noble rot fungus) protein is GDP-mannose transporter (gmt1).